The following is a 186-amino-acid chain: Shikimate kinase (186 aa).

ATP is bound at residue 15–20 (GAGKTT). Thr-19 contributes to the Mg(2+) binding site. Positions 37, 61, and 83 each coordinate substrate. An ATP-binding site is contributed by Arg-121. Arg-140 contacts substrate.

Belongs to the shikimate kinase family. Monomer. It depends on Mg(2+) as a cofactor.

It is found in the cytoplasm. It carries out the reaction shikimate + ATP = 3-phosphoshikimate + ADP + H(+). Its pathway is metabolic intermediate biosynthesis; chorismate biosynthesis; chorismate from D-erythrose 4-phosphate and phosphoenolpyruvate: step 5/7. In terms of biological role, catalyzes the specific phosphorylation of the 3-hydroxyl group of shikimic acid using ATP as a cosubstrate. This chain is Shikimate kinase, found in Psychrobacter arcticus (strain DSM 17307 / VKM B-2377 / 273-4).